The primary structure comprises 435 residues: Xylose isomerase (435 aa).

Catalysis depends on residues H99 and D102. Positions 230, 266, 269, 294, 305, 307, and 337 each coordinate Mg(2+).

It belongs to the xylose isomerase family. Homotetramer. Requires Mg(2+) as cofactor.

The protein resides in the cytoplasm. The catalysed reaction is alpha-D-xylose = alpha-D-xylulofuranose. This Tetragenococcus halophilus (Pediococcus halophilus) protein is Xylose isomerase (xylA).